The chain runs to 380 residues: Putative glutamate--cysteine ligase 2-2 (380 aa).

It belongs to the glutamate--cysteine ligase type 2 family. YbdK subfamily.

It carries out the reaction L-cysteine + L-glutamate + ATP = gamma-L-glutamyl-L-cysteine + ADP + phosphate + H(+). ATP-dependent carboxylate-amine ligase which exhibits weak glutamate--cysteine ligase activity. This is Putative glutamate--cysteine ligase 2-2 from Nocardia farcinica (strain IFM 10152).